The chain runs to 398 residues: NADH-quinone oxidoreductase subunit D (398 aa).

The protein belongs to the complex I 49 kDa subunit family. As to quaternary structure, NDH-1 is composed of 14 different subunits. Subunits NuoB, C, D, E, F, and G constitute the peripheral sector of the complex.

It is found in the cell inner membrane. The catalysed reaction is a quinone + NADH + 5 H(+)(in) = a quinol + NAD(+) + 4 H(+)(out). NDH-1 shuttles electrons from NADH, via FMN and iron-sulfur (Fe-S) centers, to quinones in the respiratory chain. The immediate electron acceptor for the enzyme in this species is believed to be ubiquinone. Couples the redox reaction to proton translocation (for every two electrons transferred, four hydrogen ions are translocated across the cytoplasmic membrane), and thus conserves the redox energy in a proton gradient. This is NADH-quinone oxidoreductase subunit D from Caulobacter vibrioides (strain ATCC 19089 / CIP 103742 / CB 15) (Caulobacter crescentus).